A 124-amino-acid chain; its full sequence is Trophoblast-specific protein alpha (124 aa).

An N-terminal signal peptide occupies residues 1–18 (MTPTIFLVILCLGVASAV). Disordered regions lie at residues 51–74 (KLHS…SGQL) and 91–124 (FEEE…NQPQ). Residues 62-74 (EGSNIEMSASGQL) are compositionally biased toward polar residues. A compositionally biased stretch (acidic residues) spans 103–112 (DDPEFEDYTE).

It localises to the secreted. Its subcellular location is the extracellular space. In terms of biological role, it may be a growth factor/hormone, perhaps involved in interaction between the maternal and fetal systems in maintenance of pregnancy. This chain is Trophoblast-specific protein alpha (Tpbpa), found in Mus musculus (Mouse).